Consider the following 184-residue polypeptide: ATP synthase subunit b 1 (184 aa).

Residues 36-55 (NILNLAILVGVLVFYGRKVV) form a helical membrane-spanning segment.

Belongs to the ATPase B chain family. F-type ATPases have 2 components, F(1) - the catalytic core - and F(0) - the membrane proton channel. F(1) has five subunits: alpha(3), beta(3), gamma(1), delta(1), epsilon(1). F(0) has four main subunits: a(1), b(1), b'(1) and c(10-14). The alpha and beta chains form an alternating ring which encloses part of the gamma chain. F(1) is attached to F(0) by a central stalk formed by the gamma and epsilon chains, while a peripheral stalk is formed by the delta, b and b' chains.

The protein localises to the cellular thylakoid membrane. Functionally, f(1)F(0) ATP synthase produces ATP from ADP in the presence of a proton or sodium gradient. F-type ATPases consist of two structural domains, F(1) containing the extramembraneous catalytic core and F(0) containing the membrane proton channel, linked together by a central stalk and a peripheral stalk. During catalysis, ATP synthesis in the catalytic domain of F(1) is coupled via a rotary mechanism of the central stalk subunits to proton translocation. In terms of biological role, component of the F(0) channel, it forms part of the peripheral stalk, linking F(1) to F(0). This Crocosphaera subtropica (strain ATCC 51142 / BH68) (Cyanothece sp. (strain ATCC 51142)) protein is ATP synthase subunit b 1.